The primary structure comprises 536 residues: Serine protease inhibitor 28Dc (536 aa).

The first 16 residues, 1–16 (MWRLLLALLLVSSVCC), serve as a signal peptide directing secretion. A glycan (N-linked (GlcNAc...) asparagine) is linked at asparagine 355.

It belongs to the serpin family.

The protein resides in the secreted. Serine protease inhibitor which is required for pupal viability and plays an essential role in regulating the melanization reaction. Inhibits spontaneous melanization and appears to be involved in the melanization immune response to physical wounding in larvae and adults. Acts by negatively regulating the Hayan-phenoloxidase (PPO1) cascade in the hemolymph and possibly the trachea. May function by controlling the initial release of the activated form of PPO1, phenoloxidase (PO) and thus maintains PO availability for processes such as wound response and pigmentation. This Drosophila melanogaster (Fruit fly) protein is Serine protease inhibitor 28Dc.